Here is a 105-residue protein sequence, read N- to C-terminus: Thioredoxin (105 aa).

A Thioredoxin domain is found at 2-105 (VKLIESKEAF…KLEASITEYA (104 aa)). Residue K3 is modified to N6-acetyllysine. Residue K8 is modified to N6-succinyllysine. Residues C32 and C35 each act as nucleophile in the active site. A disulfide bridge connects residues C32 and C35. K39 carries the N6-acetyllysine modification. Residues C62 and C69 each carry the S-nitrosocysteine modification. C73 is subject to S-nitrosocysteine; alternate. K94 carries the N6-acetyllysine; alternate modification. K94 is modified (N6-succinyllysine; alternate).

The protein belongs to the thioredoxin family. Homodimer; disulfide-linked. Interacts with TXNIP through the redox-active site. Interacts with MAP3K5 and CASP3. Interacts with APEX1; the interaction stimulates the FOS/JUN AP-1 DNA-binding activity in a redox-dependent manner. In the fully reduced protein, both Cys-69 and Cys-73 are nitrosylated in response to nitric oxide (NO). When two disulfide bonds are present in the protein, only Cys-73 is nitrosylated. Cys-73 can serve as donor for nitrosylation of target proteins.

It localises to the nucleus. The protein resides in the cytoplasm. The protein localises to the secreted. Participates in various redox reactions through the reversible oxidation of its active center dithiol to a disulfide and catalyzes dithiol-disulfide exchange reactions. Plays a role in the reversible S-nitrosylation of cysteine residues in target proteins, and thereby contributes to the response to intracellular nitric oxide. Nitrosylates the active site Cys of CASP3 in response to nitric oxide (NO), and thereby inhibits caspase-3 activity. Induces the FOS/JUN AP-1 DNA binding activity in ionizing radiation (IR) cells through its oxidation/reduction status and stimulates AP-1 transcriptional activity. Functionally, ADF augments the expression of the interleukin-2 receptor TAC (IL2R/P55). The sequence is that of Thioredoxin (Txn) from Mus musculus (Mouse).